The primary structure comprises 287 residues: U-megalopygitoxin(8)-Mc8 (287 aa).

A signal peptide spans 1–17 (MYLQYLVLSLFSTTVYG).

This sequence belongs to the caterpillar 8 family. Post-translationally, contains 2 disulfide bonds. Expressed by the venom apparatus.

The protein localises to the secreted. Functionally, probable toxin. The sequence is that of U-megalopygitoxin(8)-Mc8 from Megalopyge crispata (Black-waved flannel moth).